A 66-amino-acid chain; its full sequence is Prokaryotic ubiquitin-like protein Pup (66 aa).

Residues 1–10 are compositionally biased toward low complexity; sequence MAGQEQQSSS. Positions 1–39 are disordered; the sequence is MAGQEQQSSSPREEEHEVADAPVPVPSSPQASAHTDGVD. The ARC ATPase binding stretch occupies residues 23–60; the sequence is VPVPSSPQASAHTDGVDDLLDEIDGVLESNAEEFVRGF. Position 66 is a deamidated glutamine (Gln-66). Residue Gln-66 forms an Isoglutamyl lysine isopeptide (Gln-Lys) (interchain with K-? in acceptor proteins) linkage.

This sequence belongs to the prokaryotic ubiquitin-like protein family. As to quaternary structure, strongly interacts with the proteasome-associated ATPase ARC through a hydrophobic interface; the interacting region of Pup lies in its C-terminal half. There is one Pup binding site per ARC hexamer ring. Post-translationally, is modified by deamidation of its C-terminal glutamine to glutamate by the deamidase Dop, a prerequisite to the subsequent pupylation process.

It participates in protein degradation; proteasomal Pup-dependent pathway. Functionally, protein modifier that is covalently attached to lysine residues of substrate proteins, thereby targeting them for proteasomal degradation. The tagging system is termed pupylation. This is Prokaryotic ubiquitin-like protein Pup from Renibacterium salmoninarum (strain ATCC 33209 / DSM 20767 / JCM 11484 / NBRC 15589 / NCIMB 2235).